Consider the following 234-residue polypeptide: Ubiquitin domain-containing protein 2 (234 aa).

Positions 1-46 are disordered; sequence MGGCVGAQHDSSGSLNENSEGTGVALGRNQPLKKEKPKWKSDYPMT. Positions 9–21 are enriched in polar residues; it reads HDSSGSLNENSEG. Over residues 32-41 the composition is skewed to basic and acidic residues; that stretch reads LKKEKPKWKS. A Ubiquitin-like domain is found at 152-227; that stretch reads SQLRLRLSTG…VQVIMSQPLQ (76 aa).

It localises to the cytoplasm. The polypeptide is Ubiquitin domain-containing protein 2 (UBTD2) (Bos taurus (Bovine)).